A 218-amino-acid polypeptide reads, in one-letter code: MVPRDLGSRIRRRGLMLVLSSPSGAGKSTIARNLLESDSSLELSVSVTTRPRRGSEIEGVHYHFRTMREFERLRDSDALLEWAEVHGNCYATPREPAELALAQGRDMLFDIDWQGAQQLKEKMRADIVSIFILPPSMKELKARLKRRAEDQEAVIETRLKNARNEIEHWKEYDFVIVNDDLDRAFAEVRGIVVAERLRRDRRPGLFDFVSGLLDEKTV.

The Guanylate kinase-like domain maps to 14 to 193; it reads GLMLVLSSPS…AFAEVRGIVV (180 aa). 21 to 28 serves as a coordination point for ATP; it reads SPSGAGKS.

This sequence belongs to the guanylate kinase family.

Its subcellular location is the cytoplasm. The enzyme catalyses GMP + ATP = GDP + ADP. Essential for recycling GMP and indirectly, cGMP. The sequence is that of Guanylate kinase (gmk) from Mesorhizobium japonicum (strain LMG 29417 / CECT 9101 / MAFF 303099) (Mesorhizobium loti (strain MAFF 303099)).